Consider the following 347-residue polypeptide: N-acetyl-gamma-glutamyl-phosphate reductase (347 aa).

The active site involves C155.

Belongs to the NAGSA dehydrogenase family. Type 1 subfamily.

The protein localises to the cytoplasm. The enzyme catalyses N-acetyl-L-glutamate 5-semialdehyde + phosphate + NADP(+) = N-acetyl-L-glutamyl 5-phosphate + NADPH + H(+). It participates in amino-acid biosynthesis; L-arginine biosynthesis; N(2)-acetyl-L-ornithine from L-glutamate: step 3/4. Functionally, catalyzes the NADPH-dependent reduction of N-acetyl-5-glutamyl phosphate to yield N-acetyl-L-glutamate 5-semialdehyde. This chain is N-acetyl-gamma-glutamyl-phosphate reductase, found in Akkermansia muciniphila (strain ATCC BAA-835 / DSM 22959 / JCM 33894 / BCRC 81048 / CCUG 64013 / CIP 107961 / Muc).